The primary structure comprises 264 residues: Thymidylate synthase (264 aa).

Residue Arg-21 participates in dUMP binding. Position 51 (His-51) interacts with (6R)-5,10-methylene-5,6,7,8-tetrahydrofolate. Position 126 to 127 (126 to 127 (RR)) interacts with dUMP. Residue Cys-146 is the Nucleophile of the active site. DUMP contacts are provided by residues 166-169 (RSAD), Asn-177, and 207-209 (HLY). Asp-169 is a (6R)-5,10-methylene-5,6,7,8-tetrahydrofolate binding site. Ala-263 serves as a coordination point for (6R)-5,10-methylene-5,6,7,8-tetrahydrofolate.

Belongs to the thymidylate synthase family. Bacterial-type ThyA subfamily. As to quaternary structure, homodimer.

The protein resides in the cytoplasm. It catalyses the reaction dUMP + (6R)-5,10-methylene-5,6,7,8-tetrahydrofolate = 7,8-dihydrofolate + dTMP. Its pathway is pyrimidine metabolism; dTTP biosynthesis. Its function is as follows. Catalyzes the reductive methylation of 2'-deoxyuridine-5'-monophosphate (dUMP) to 2'-deoxythymidine-5'-monophosphate (dTMP) while utilizing 5,10-methylenetetrahydrofolate (mTHF) as the methyl donor and reductant in the reaction, yielding dihydrofolate (DHF) as a by-product. This enzymatic reaction provides an intracellular de novo source of dTMP, an essential precursor for DNA biosynthesis. The polypeptide is Thymidylate synthase (Polynucleobacter asymbioticus (strain DSM 18221 / CIP 109841 / QLW-P1DMWA-1) (Polynucleobacter necessarius subsp. asymbioticus)).